Consider the following 86-residue polypeptide: Heat shock factor-binding protein (86 aa).

Positions Met-34–Met-63 form a coiled coil. The segment at Ile-42–Leu-52 is required for interactions with heat shock factors (HSFs). Residues Leu-59 to Ser-86 form a disordered region.

The protein belongs to the HSBP1 family. Homohexamer. Interacts with HSFA1A, HSFA1B and HSFA2. As to expression, mostly expressed in siliques and flowers, and, to a lower extent, in roots, stems and leaves.

Its subcellular location is the nucleus. The protein resides in the cytoplasm. It localises to the cytosol. Its function is as follows. Negative regulator of the heat shock (HS) response. Affects negatively HSFA1B DNA-binding capacity in vitro. Involved in acquired thermotolerance but not basal thermotolerance. Crucial for seed development, after fertilization and during embryogenesis. This is Heat shock factor-binding protein from Arabidopsis thaliana (Mouse-ear cress).